Here is a 293-residue protein sequence, read N- to C-terminus: Formamidopyrimidine-DNA glycosylase (293 aa).

Catalysis depends on proline 2, which acts as the Schiff-base intermediate with DNA. The active-site Proton donor is the glutamate 3. Catalysis depends on lysine 60, which acts as the Proton donor; for beta-elimination activity. DNA is bound by residues histidine 110, arginine 129, and arginine 174. Residues 259 to 293 (NVYRRTGKECRKCGNLIEKQKIAGRSTHWCPNCQK) form an FPG-type zinc finger. The active-site Proton donor; for delta-elimination activity is the arginine 283.

It belongs to the FPG family. In terms of assembly, monomer. The cofactor is Zn(2+).

It carries out the reaction Hydrolysis of DNA containing ring-opened 7-methylguanine residues, releasing 2,6-diamino-4-hydroxy-5-(N-methyl)formamidopyrimidine.. It catalyses the reaction 2'-deoxyribonucleotide-(2'-deoxyribose 5'-phosphate)-2'-deoxyribonucleotide-DNA = a 3'-end 2'-deoxyribonucleotide-(2,3-dehydro-2,3-deoxyribose 5'-phosphate)-DNA + a 5'-end 5'-phospho-2'-deoxyribonucleoside-DNA + H(+). In terms of biological role, involved in base excision repair of DNA damaged by oxidation or by mutagenic agents. Acts as a DNA glycosylase that recognizes and removes damaged bases. Has a preference for oxidized purines, such as 7,8-dihydro-8-oxoguanine (8-oxoG). Has AP (apurinic/apyrimidinic) lyase activity and introduces nicks in the DNA strand. Cleaves the DNA backbone by beta-delta elimination to generate a single-strand break at the site of the removed base with both 3'- and 5'-phosphates. This chain is Formamidopyrimidine-DNA glycosylase, found in Prochlorococcus marinus (strain MIT 9312).